A 172-amino-acid polypeptide reads, in one-letter code: 3-hydroxydecanoyl-[acyl-carrier-protein] dehydratase (172 aa).

Residue histidine 71 is part of the active site.

The protein belongs to the thioester dehydratase family. FabA subfamily. In terms of assembly, homodimer.

It is found in the cytoplasm. The catalysed reaction is a (3R)-hydroxyacyl-[ACP] = a (2E)-enoyl-[ACP] + H2O. It carries out the reaction (3R)-hydroxydecanoyl-[ACP] = (2E)-decenoyl-[ACP] + H2O. The enzyme catalyses (2E)-decenoyl-[ACP] = (3Z)-decenoyl-[ACP]. It participates in lipid metabolism; fatty acid biosynthesis. Functionally, necessary for the introduction of cis unsaturation into fatty acids. Catalyzes the dehydration of (3R)-3-hydroxydecanoyl-ACP to E-(2)-decenoyl-ACP and then its isomerization to Z-(3)-decenoyl-ACP. Can catalyze the dehydratase reaction for beta-hydroxyacyl-ACPs with saturated chain lengths up to 16:0, being most active on intermediate chain length. The protein is 3-hydroxydecanoyl-[acyl-carrier-protein] dehydratase of Blochmanniella floridana.